Reading from the N-terminus, the 371-residue chain is Palmitoyl-monogalactosyldiacylglycerol delta-7 desaturase, chloroplastic (371 aa).

The transit peptide at 1–67 directs the protein to the chloroplast; that stretch reads MASLLTKPKP…KGLKRDVTTA (67 aa). A run of 2 helical transmembrane segments spans residues 103–123 and 127–147; these read FGAVAVVLSMHLLSLLAPFQF and AVSVAFGLYIVTGLLGITLSF. The short motif at 148–153 is the Histidine box-1 element; the sequence is HRNLSH. The Histidine box-2 signature appears at 185-189; sequence HRYHH. The chain crosses the membrane as a helical span at residues 251-271; it reads ALAVALYAMGGFPFIVWGMGV. The Histidine box-3 signature appears at 317-321; it reads HNNHH.

Belongs to the fatty acid desaturase type 1 family. Fe(2+) is required as a cofactor. In terms of tissue distribution, highly expressed in young leaves. Low expression in roots.

Its subcellular location is the plastid. The protein resides in the chloroplast membrane. The enzyme catalyses a 1-acyl-2-hexadecanoyl-glycerolipid + 2 reduced [2Fe-2S]-[ferredoxin] + O2 + 2 H(+) = a 1-acyl-2-[(7Z)-hexadecenoyl]-glycerolipid + 2 oxidized [2Fe-2S]-[ferredoxin] + 2 H2O. The protein operates within lipid metabolism; oxylipin biosynthesis. Its pathway is lipid metabolism; polyunsaturated fatty acid biosynthesis. Functionally, fatty acid desaturase involved in the first desaturation step leading to the formation of hexadeca 7,10,13-trienoic acid (16:3(7Z,10Z,13Z)), the major functional components of thylakoid membranes. Required for chloroplast biogenesis at low temperature. Also indirectly involved in the production of the oxylipin dinor-oxo-phyto-dienoic acid implicated in wound signaling. This is Palmitoyl-monogalactosyldiacylglycerol delta-7 desaturase, chloroplastic from Arabidopsis thaliana (Mouse-ear cress).